A 155-amino-acid polypeptide reads, in one-letter code: Small ribosomal subunit protein uS7 (155 aa).

This sequence belongs to the universal ribosomal protein uS7 family. As to quaternary structure, part of the 30S ribosomal subunit. Contacts proteins S9 and S11.

Its function is as follows. One of the primary rRNA binding proteins, it binds directly to 16S rRNA where it nucleates assembly of the head domain of the 30S subunit. Is located at the subunit interface close to the decoding center, probably blocks exit of the E-site tRNA. The protein is Small ribosomal subunit protein uS7 of Corynebacterium aurimucosum (strain ATCC 700975 / DSM 44827 / CIP 107346 / CN-1) (Corynebacterium nigricans).